Here is a 599-residue protein sequence, read N- to C-terminus: Elongation factor 4 (599 aa).

One can recognise a tr-type G domain in the interval 2 to 184; the sequence is KNIRNFSIIA…RLVRDIPPPE (183 aa). GTP is bound by residues 14–19 and 131–134; these read DHGKST and NKID.

Belongs to the TRAFAC class translation factor GTPase superfamily. Classic translation factor GTPase family. LepA subfamily.

It is found in the cell inner membrane. It catalyses the reaction GTP + H2O = GDP + phosphate + H(+). In terms of biological role, required for accurate and efficient protein synthesis under certain stress conditions. May act as a fidelity factor of the translation reaction, by catalyzing a one-codon backward translocation of tRNAs on improperly translocated ribosomes. Back-translocation proceeds from a post-translocation (POST) complex to a pre-translocation (PRE) complex, thus giving elongation factor G a second chance to translocate the tRNAs correctly. Binds to ribosomes in a GTP-dependent manner. The sequence is that of Elongation factor 4 from Klebsiella pneumoniae subsp. pneumoniae (strain ATCC 700721 / MGH 78578).